The chain runs to 177 residues: Large ribosomal subunit protein uL6 (177 aa).

Residue K44 is modified to N6-acetyllysine.

The protein belongs to the universal ribosomal protein uL6 family. Part of the 50S ribosomal subunit.

Functionally, this protein binds to the 23S rRNA, and is important in its secondary structure. It is located near the subunit interface in the base of the L7/L12 stalk, and near the tRNA binding site of the peptidyltransferase center. This is Large ribosomal subunit protein uL6 from Escherichia fergusonii (strain ATCC 35469 / DSM 13698 / CCUG 18766 / IAM 14443 / JCM 21226 / LMG 7866 / NBRC 102419 / NCTC 12128 / CDC 0568-73).